The sequence spans 816 residues: Transcription factor qa-1f (816 aa).

Positions 76 to 103 (CDQCRAAREKCDGIQPACFPCVSQGRSC) form a DNA-binding region, zn(2)-C6 fungal-type. The span at 184 to 202 (SGQAAQDPSEDGQSPSEDI) shows a compositional bias: polar residues. The segment at 184–235 (SGQAAQDPSEDGQSPSEDINVQDAGAKTSDFPHAPHLTFSAPKSSTAETRTL) is disordered.

Its subcellular location is the nucleus. Its function is as follows. Transcription activator; part of the qa gene cluster that mediates the catabolism of quinic acid (QA) and as such, allows the use of QA as a sole carbon source. Activates the expression of qa cluster genes by binding to a 16 base-pair consensus sequence 5'-GGRTAARYRYTTAYCC-3' present in the promoters of the target genes. Regulates its own expression. May regulate the expression of many other genes inclusing genes with products in 8 mutually connected metabolic pathways: (1) starch and sucrose metabolism; (2) glycolysis/glucanogenesis; (3) TCA Cycle; (4) butanoate metabolism; (5) pyruvate metabolism; (6) aromatic amino acid and QA metabolism; (7) valine, leucine, and isoleucine degradation; and (8) transport of sugars and amino acids. The polypeptide is Transcription factor qa-1f (Neurospora crassa (strain ATCC 24698 / 74-OR23-1A / CBS 708.71 / DSM 1257 / FGSC 987)).